A 129-amino-acid polypeptide reads, in one-letter code: Modulator protein MzrA (129 aa).

The Cytoplasmic segment spans residues 1–14 (MINFRGRFGRPLWH). A helical transmembrane segment spans residues 15–35 (YLVLPVVLLLLAVILLTPMIV). At 36–129 (QTESTLKIRP…VFRSNQQNLG (94 aa)) the chain is on the periplasmic side.

This sequence belongs to the MzrA family. As to quaternary structure, interacts with EnvZ.

The protein resides in the cell inner membrane. Functionally, modulates the activity of the EnvZ/OmpR two-component regulatory system, probably by directly modulating EnvZ enzymatic activity and increasing stability of phosphorylated OmpR. This Yersinia pestis (strain Pestoides F) protein is Modulator protein MzrA.